A 336-amino-acid polypeptide reads, in one-letter code: Ketol-acid reductoisomerase (NADP(+)) (336 aa).

Positions 2-182 (AKIYYQQDCN…GGARAGVLET (181 aa)) constitute a KARI N-terminal Rossmann domain. NADP(+)-binding positions include 25-28 (YGSQ), S51, S53, and 83-86 (DEKQ). H108 is an active-site residue. G134 is a binding site for NADP(+). One can recognise a KARI C-terminal knotted domain in the interval 183–328 (TFREETETDL…AELRGLMSWT (146 aa)). The Mg(2+) site is built by D191, E195, E227, and E231. Position 252 (S252) interacts with substrate.

This sequence belongs to the ketol-acid reductoisomerase family. The cofactor is Mg(2+).

The catalysed reaction is (2R)-2,3-dihydroxy-3-methylbutanoate + NADP(+) = (2S)-2-acetolactate + NADPH + H(+). It catalyses the reaction (2R,3R)-2,3-dihydroxy-3-methylpentanoate + NADP(+) = (S)-2-ethyl-2-hydroxy-3-oxobutanoate + NADPH + H(+). It participates in amino-acid biosynthesis; L-isoleucine biosynthesis; L-isoleucine from 2-oxobutanoate: step 2/4. Its pathway is amino-acid biosynthesis; L-valine biosynthesis; L-valine from pyruvate: step 2/4. Involved in the biosynthesis of branched-chain amino acids (BCAA). Catalyzes an alkyl-migration followed by a ketol-acid reduction of (S)-2-acetolactate (S2AL) to yield (R)-2,3-dihydroxy-isovalerate. In the isomerase reaction, S2AL is rearranged via a Mg-dependent methyl migration to produce 3-hydroxy-3-methyl-2-ketobutyrate (HMKB). In the reductase reaction, this 2-ketoacid undergoes a metal-dependent reduction by NADPH to yield (R)-2,3-dihydroxy-isovalerate. This Lachnoclostridium phytofermentans (strain ATCC 700394 / DSM 18823 / ISDg) (Clostridium phytofermentans) protein is Ketol-acid reductoisomerase (NADP(+)).